The chain runs to 23 residues: Acidic phospholipase A2 CTs-A1 (23 aa).

Ca(2+) is required as a cofactor. Contains 7 disulfide bonds. As to expression, expressed by the venom gland.

It is found in the secreted. It catalyses the reaction a 1,2-diacyl-sn-glycero-3-phosphocholine + H2O = a 1-acyl-sn-glycero-3-phosphocholine + a fatty acid + H(+). Its function is as follows. Snake venom phospholipase A2 (PLA2) that shows a moderate inhibition of ADP-induced human platelet aggregation when tested on platelet rich plasma. Exhibits moderate hydrolytic activities and prefers the anionic micelles (dPPC with deoxycholate) to the zwitterionic micelles (dPPC with Triton X-100). PLA2 catalyzes the calcium-dependent hydrolysis of the 2-acyl groups in 3-sn-phosphoglycerides. This Trimeresurus stejnegeri (Chinese green tree viper) protein is Acidic phospholipase A2 CTs-A1.